The sequence spans 180 residues: ATP-dependent protease subunit HslV (180 aa).

The active site involves T5. Na(+) is bound by residues G161, C164, and T167.

Belongs to the peptidase T1B family. HslV subfamily. In terms of assembly, a double ring-shaped homohexamer of HslV is capped on each side by a ring-shaped HslU homohexamer. The assembly of the HslU/HslV complex is dependent on binding of ATP.

The protein localises to the cytoplasm. It catalyses the reaction ATP-dependent cleavage of peptide bonds with broad specificity.. Its activity is regulated as follows. Allosterically activated by HslU binding. In terms of biological role, protease subunit of a proteasome-like degradation complex believed to be a general protein degrading machinery. This is ATP-dependent protease subunit HslV from Campylobacter jejuni subsp. jejuni serotype O:2 (strain ATCC 700819 / NCTC 11168).